We begin with the raw amino-acid sequence, 222 residues long: Nudix hydrolase 11 (222 aa).

In terms of domain architecture, Nudix hydrolase spans 31–175 (AKSSAVLVCL…EGERYLLQYF (145 aa)). Residues 73 to 96 (GGKRDQEDKDDIATALREAREEIG) carry the Nudix box motif. 2 residues coordinate Mg(2+): Glu90 and Glu94. Residues 186 to 204 (FIIWALTAGILIRVASIVY) form a helical membrane-spanning segment.

The protein belongs to the Nudix hydrolase family. PCD1 subfamily. Requires Mn(2+) as cofactor. The cofactor is Mg(2+). Expressed in roots, stems and leaves.

It is found in the peroxisome membrane. Its function is as follows. Coenzyme A diphosphatase which mediates the cleavage of CoA into 3',5'-ADP from CoA and 4'-phosphopantetheine. Can use malonyl-CoA, hexanoyl-CoA, lauroyl-CoA, myristoyl-CoA and palmitoyl-CoA as substrates, but not isobutyryl-CoA or propionyl-CoA. In Arabidopsis thaliana (Mouse-ear cress), this protein is Nudix hydrolase 11 (NUDT11).